Consider the following 132-residue polypeptide: Phosphoribosyl-AMP cyclohydrolase (132 aa).

Aspartate 79 is a Mg(2+) binding site. Cysteine 80 contacts Zn(2+). 2 residues coordinate Mg(2+): aspartate 81 and aspartate 83. Zn(2+)-binding residues include cysteine 100 and cysteine 107.

The protein belongs to the PRA-CH family. In terms of assembly, homodimer. The cofactor is Mg(2+). Zn(2+) is required as a cofactor.

The protein localises to the cytoplasm. It carries out the reaction 1-(5-phospho-beta-D-ribosyl)-5'-AMP + H2O = 1-(5-phospho-beta-D-ribosyl)-5-[(5-phospho-beta-D-ribosylamino)methylideneamino]imidazole-4-carboxamide. The protein operates within amino-acid biosynthesis; L-histidine biosynthesis; L-histidine from 5-phospho-alpha-D-ribose 1-diphosphate: step 3/9. In terms of biological role, catalyzes the hydrolysis of the adenine ring of phosphoribosyl-AMP. The chain is Phosphoribosyl-AMP cyclohydrolase from Delftia acidovorans (strain DSM 14801 / SPH-1).